The sequence spans 313 residues: Methionyl-tRNA formyltransferase (313 aa).

112 to 115 (SLLP) is a binding site for (6S)-5,6,7,8-tetrahydrofolate.

It belongs to the Fmt family.

It catalyses the reaction L-methionyl-tRNA(fMet) + (6R)-10-formyltetrahydrofolate = N-formyl-L-methionyl-tRNA(fMet) + (6S)-5,6,7,8-tetrahydrofolate + H(+). In terms of biological role, attaches a formyl group to the free amino group of methionyl-tRNA(fMet). The formyl group appears to play a dual role in the initiator identity of N-formylmethionyl-tRNA by promoting its recognition by IF2 and preventing the misappropriation of this tRNA by the elongation apparatus. The protein is Methionyl-tRNA formyltransferase of Geotalea uraniireducens (strain Rf4) (Geobacter uraniireducens).